A 441-amino-acid polypeptide reads, in one-letter code: D-inositol 3-phosphate glycosyltransferase (441 aa).

Histidine 38 is a binding site for 1D-myo-inositol 3-phosphate. UDP-N-acetyl-alpha-D-glucosamine contacts are provided by residues 44–45 and glycine 52; that span reads QP. Residues 49-54, lysine 107, tyrosine 140, threonine 164, and arginine 184 contribute to the 1D-myo-inositol 3-phosphate site; that span reads DAGGMN. The UDP-N-acetyl-alpha-D-glucosamine site is built by arginine 258, lysine 263, and glutamine 316. Mg(2+)-binding residues include phenylalanine 325, glutamine 326, and alanine 328. Residues glutamate 338 and glutamate 346 each coordinate UDP-N-acetyl-alpha-D-glucosamine. Threonine 352 lines the Mg(2+) pocket.

Belongs to the glycosyltransferase group 1 family. MshA subfamily. As to quaternary structure, homodimer.

The enzyme catalyses 1D-myo-inositol 3-phosphate + UDP-N-acetyl-alpha-D-glucosamine = 1D-myo-inositol 2-acetamido-2-deoxy-alpha-D-glucopyranoside 3-phosphate + UDP + H(+). Its function is as follows. Catalyzes the transfer of a N-acetyl-glucosamine moiety to 1D-myo-inositol 3-phosphate to produce 1D-myo-inositol 2-acetamido-2-deoxy-glucopyranoside 3-phosphate in the mycothiol biosynthesis pathway. This is D-inositol 3-phosphate glycosyltransferase from Mycolicibacterium paratuberculosis (strain ATCC BAA-968 / K-10) (Mycobacterium paratuberculosis).